The primary structure comprises 109 residues: Nucleoid-associated protein Ldb1634 (109 aa).

The tract at residues 18–40 (MMKQAKKLQEQMAQEQENITTQE) is disordered.

Belongs to the YbaB/EbfC family. In terms of assembly, homodimer.

It is found in the cytoplasm. The protein localises to the nucleoid. Its function is as follows. Binds to DNA and alters its conformation. May be involved in regulation of gene expression, nucleoid organization and DNA protection. The polypeptide is Nucleoid-associated protein Ldb1634 (Lactobacillus delbrueckii subsp. bulgaricus (strain ATCC 11842 / DSM 20081 / BCRC 10696 / JCM 1002 / NBRC 13953 / NCIMB 11778 / NCTC 12712 / WDCM 00102 / Lb 14)).